The primary structure comprises 1028 residues: Kinesin-like protein KIF28 (1028 aa).

A Kinesin motor domain is found at 11 to 358 (SVRVAVRVRP…LRYAERAKKV (348 aa)). 114–121 (GQTGSGKS) contacts ATP. Residues 460–523 (CDVGRAASNA…LQHLDRIILG (64 aa)) form the FHA domain. The stretch at 873 to 902 (NQVPELYQKLLKLEQETELLRDVNRALRGE) forms a coiled coil.

The protein belongs to the TRAFAC class myosin-kinesin ATPase superfamily. Kinesin family.

It is found in the mitochondrion membrane. In terms of biological role, microtubule-dependent motor protein required for mitochondrion morphology and transport of mitochondria in neuronal cells. This Mus musculus (Mouse) protein is Kinesin-like protein KIF28.